The primary structure comprises 331 residues: Glycerol-3-phosphate dehydrogenase [NAD(P)+] (331 aa).

Positions 11 and 101 each coordinate NADPH. Lysine 101, glycine 132, and serine 134 together coordinate sn-glycerol 3-phosphate. Alanine 136 is a binding site for NADPH. Residues lysine 188, aspartate 241, serine 251, arginine 252, and asparagine 253 each coordinate sn-glycerol 3-phosphate. The active-site Proton acceptor is the lysine 188. Arginine 252 lines the NADPH pocket. Position 278 (glutamate 278) interacts with NADPH.

This sequence belongs to the NAD-dependent glycerol-3-phosphate dehydrogenase family.

It localises to the cytoplasm. The enzyme catalyses sn-glycerol 3-phosphate + NAD(+) = dihydroxyacetone phosphate + NADH + H(+). The catalysed reaction is sn-glycerol 3-phosphate + NADP(+) = dihydroxyacetone phosphate + NADPH + H(+). It participates in membrane lipid metabolism; glycerophospholipid metabolism. Its function is as follows. Catalyzes the reduction of the glycolytic intermediate dihydroxyacetone phosphate (DHAP) to sn-glycerol 3-phosphate (G3P), the key precursor for phospholipid synthesis. The sequence is that of Glycerol-3-phosphate dehydrogenase [NAD(P)+] from Phytoplasma mali (strain AT).